Here is a 553-residue protein sequence, read N- to C-terminus: Chaperonin GroEL 2 (553 aa).

Residues Thr29 to Pro32, Asp86 to Thr90, Gly414, and Asp495 contribute to the ATP site.

This sequence belongs to the chaperonin (HSP60) family. In terms of assembly, forms a cylinder of 14 subunits composed of two heptameric rings stacked back-to-back. Interacts with the co-chaperonin GroES.

Its subcellular location is the cytoplasm. The catalysed reaction is ATP + H2O + a folded polypeptide = ADP + phosphate + an unfolded polypeptide.. Functionally, together with its co-chaperonin GroES, plays an essential role in assisting protein folding. The GroEL-GroES system forms a nano-cage that allows encapsulation of the non-native substrate proteins and provides a physical environment optimized to promote and accelerate protein folding. This Gloeobacter violaceus (strain ATCC 29082 / PCC 7421) protein is Chaperonin GroEL 2.